Reading from the N-terminus, the 411-residue chain is Serine--tRNA ligase (411 aa).

Residue Thr-226–Glu-228 participates in L-serine binding. Arg-257–Glu-259 provides a ligand contact to ATP. Residue Glu-280 participates in L-serine binding. Glu-344–Ser-347 is a binding site for ATP. Residue Ser-379 participates in L-serine binding.

It belongs to the class-II aminoacyl-tRNA synthetase family. Type-1 seryl-tRNA synthetase subfamily. In terms of assembly, homodimer. The tRNA molecule binds across the dimer.

The protein localises to the cytoplasm. It carries out the reaction tRNA(Ser) + L-serine + ATP = L-seryl-tRNA(Ser) + AMP + diphosphate + H(+). The enzyme catalyses tRNA(Sec) + L-serine + ATP = L-seryl-tRNA(Sec) + AMP + diphosphate + H(+). Its pathway is aminoacyl-tRNA biosynthesis; selenocysteinyl-tRNA(Sec) biosynthesis; L-seryl-tRNA(Sec) from L-serine and tRNA(Sec): step 1/1. Functionally, catalyzes the attachment of serine to tRNA(Ser). Is also able to aminoacylate tRNA(Sec) with serine, to form the misacylated tRNA L-seryl-tRNA(Sec), which will be further converted into selenocysteinyl-tRNA(Sec). This Campylobacter jejuni subsp. doylei (strain ATCC BAA-1458 / RM4099 / 269.97) protein is Serine--tRNA ligase.